A 476-amino-acid polypeptide reads, in one-letter code: Aspartate kinase Ask_Ect (476 aa).

The ACT domain maps to 405–476 (SAIGSDLKVK…ENHGDVIAAA (72 aa)).

This sequence belongs to the aspartokinase family. In terms of assembly, monomer.

The protein localises to the cytoplasm. It catalyses the reaction L-aspartate + ATP = 4-phospho-L-aspartate + ADP. It participates in amine and polyamine biosynthesis; ectoine biosynthesis. With respect to regulation, allosterically and strongly feedback inhibited by tryptophan. The presence of either 650 mM NaCl or KCl reduces the inhibition by tryptophan. Involved in the biosynthesis of L-aspartate-beta-semialdehyde, which is an intermediate in the biosynthesis of ectoine, a highly soluble organic osmolyte, called compatible solute. Ectoine is used to avoid excessive water efflux, plasmolysis, molecular crowding of the cytoplasm, and cessation of growth in high salinity environments. Catalyzes the phosphorylation of the beta-carboxyl group of L-aspartate to yield 4-phospho-L-aspartate. This Stutzerimonas stutzeri (strain A1501) (Pseudomonas stutzeri) protein is Aspartate kinase Ask_Ect (ask).